A 154-amino-acid polypeptide reads, in one-letter code: Transcriptional repressor NrdR (154 aa).

The segment at 3–34 is a zinc-finger region; sequence CPFCRHPDSRVIDSRETDEGQAIRRRRSCPEC. The ATP-cone domain occupies 46-136; sequence LAVVKRSGVT…VYRSFSSADD (91 aa).

Belongs to the NrdR family. Zn(2+) is required as a cofactor.

Functionally, negatively regulates transcription of bacterial ribonucleotide reductase nrd genes and operons by binding to NrdR-boxes. The polypeptide is Transcriptional repressor NrdR (Mycobacterium bovis (strain ATCC BAA-935 / AF2122/97)).